The chain runs to 1637 residues: MSHSHPAGLLATYNSLTDKHLAGYFNNTRIRRHLLRSGLITRSGRILSEKEYKVNNMKQDHQKYIRECLARAIFHKVLDMERYHQLEIKRKLDTLARKERIQRLKGEHTRRFIEDNMPVLTPHPPAGPKTNRGHSVLAEEGRSSPLTLTAPRPYTAPGNMQPPVRLQPLLSSRQTRNGSKITSGSKPKGSLLESEALFPLGGKKAMMKFRNYMDHSQKEDLYQLPHINSYHTPVPPTPQPQAGKNFRDKRLESWRRKRLRPITAPNGLEPLFAKDPGRIYKTAPHSNAVITMVYFGKNVHLSYDDIDFRDEIKIYQQHCGGENLCVYKGKLLEKDTFQFISKRHHGFPFSLTFFLNGIQVNRISSCCEFKHRRSTRLGGKRGYFGFVCVEKASPCYRCIIAMGLDRKPSSTKPKKEKITEKKEEPPNKSQGKLRKDRMNAPSKRNEMERKESCVSAAFSAEEIKLGVKEVRTAIEEMEWKGKSGRDVWEEDQDNAVKYDYEEDFEVDDEKQDEKVDEDEDQADDQMSGGSKTPTESEKDNRNPEKKIETSSEKAHDSENEDTGCSDSEEDDRQDVKTMSSISSRSHPYSSESEDDSTEVGGEADSVSEEGSSRSSSSQDLRENDDPGKPHFPIEKYLETEIEEQEITEGHNGPWLTELSGMHVTEGKPTMGIQALSESEHKEPRRVASSEVRAKSQLQKEAGLPGVEEEVGQITGGAQEPGHCCSNTAPGLSPTDDGVTPMRKPEVNLGRGTEERAAISANEQPEQDAQEMHTLKEEAMKKDESSQPEDTDAHAGVREESGMQKDGTCHPQDAGIDVELRERVDMQEDGTCHPQGADMDVGLKERVGVQEDGTHYPQDADMDVGLRERVGMQEDGTHHSQDADMDVELKERVGMQEDGTCHPQDANMDVELKERVGMQEDGTCHPQDADMDVELEERTGMQEDGTHHPQGADVDLGLRERAGMQEDGTCYPQNANMDVGLREKAGISEVLLGERSPTGVLLASAEQSTEKGECYLNIASEAEAGTEGSSRHGEEQLIPTGKVAAEGSVFLSVEQARDRQKDEDLDRQALLQTQMEKERAVSEAGQELKAEFTDSGGLNSETLEEAAVLKEVGTSEVKEAEREVGSPKTDGDQGEEEALTELEVVGPVEDTGPERKAGSEETVLGGERAATERKDFLEEAPISASTGEVQASPREVFRGNHELCKEDTAREGVIADTESTAEQDLRAVFPGELAAAGGIEKVERLTPPLRETGSEREEETGPEVLKTEDLLGEQKVKGEEEGTAKEVGSEEEDRASRPEMEAHAKDVEPTGATELGEATKLLEDPPKERAITLSEATPQFGKSPKESEATATEHKGGEELPGQESKALWPQGRGLSHDGEGLLGAPGPEADKAQGPEGFFTARCEEWAAKELDSSAGSERLEEDQPLQAQREDIQRMTQGNLSGERLTRAVVVCGEAKAENPQGEGSEDKECPPGTVTGSLTGQNWNMGGNIVEAEEDPHGGGIEEPTAEQKEEESAESKSADGIPEASSAANAQKETWDGAGEALGEAAAEERTGTEDMAPRTEKVAVVEEVTSAGAMVETEQEQAPEAQDREGGETKASRHTGTAGEDTGSTGKDEEHQSGAAEEFRESVSQRETA.

Disordered stretches follow at residues 145–192, 408–453, 478–814, 1111–1194, 1238–1445, and 1457–1637; these read PLTL…GSLL, PSST…KESC, EWKG…QDAG, VGTS…SPRE, IEKV…SGER, and KAEN…RETA. Polar residues predominate over residues 169-185; the sequence is LLSSRQTRNGSKITSGS. Basic and acidic residues-rich tracts occupy residues 416–426, 443–452, and 478–487; these read EKITEKKEEPP, KRNEMERKES, and EWKGKSGRDV. A compositionally biased stretch (acidic residues) spans 500–523; it reads YEEDFEVDDEKQDEKVDEDEDQAD. Over residues 534-557 the composition is skewed to basic and acidic residues; it reads TESEKDNRNPEKKIETSSEKAHDS. Residues 558 to 572 are compositionally biased toward acidic residues; the sequence is ENEDTGCSDSEEDDR. Composition is skewed to low complexity over residues 579-590 and 608-617; these read SSISSRSHPYSS and EEGSSRSSSS. Composition is skewed to basic and acidic residues over residues 619–638, 677–693, 769–802, 1115–1130, 1264–1307, 1319–1329, 1342–1357, and 1402–1412; these read DLRE…KYLE, ESEH…EVRA, QEMH…ESGM, EVKE…KTDG, LKTE…KDVE, KLLEDPPKERA, SPKE…KGGE, and RCEEWAAKELD. Polar residues predominate over residues 1476–1487; it reads VTGSLTGQNWNM. Composition is skewed to basic and acidic residues over residues 1550-1568, 1589-1599, and 1614-1637; these read AEER…KVAV, AQDREGGETKA, and GKDE…RETA.

It localises to the cell projection. Its subcellular location is the cilium. The protein resides in the cytoplasm. Component of the primary cilium that controls cilium formation and length. May function within retrograde intraflagellar transport (IFT)-associated pathways to remove signaling proteins from primary cilia. Also involved in neuronal vesicle biogenesis and neurotransmitter vesicular function. This chain is Glutamate rich 3, found in Mus musculus (Mouse).